Consider the following 303-residue polypeptide: Enoyl-CoA hydratase domain-containing protein 3, mitochondrial (303 aa).

The N-terminal 17 residues, 1-17 (MAAVAVLRAFGASGPMC), are a transit peptide targeting the mitochondrion. Lys110 bears the N6-succinyllysine mark.

The protein belongs to the enoyl-CoA hydratase/isomerase family. In terms of tissue distribution, expressed in adipocytes. Expressed in blood cells, with higher expression in patients with low coronary lesions.

The protein localises to the mitochondrion. May play a role in fatty acid biosynthesis and insulin sensitivity. This is Enoyl-CoA hydratase domain-containing protein 3, mitochondrial from Homo sapiens (Human).